The following is a 221-amino-acid chain: 7-cyano-7-deazaguanine synthase (221 aa).

ATP is bound at residue 7–17 (LSGGMDSSTLA). The Zn(2+) site is built by Cys-187, Cys-195, Cys-198, and Cys-201.

The protein belongs to the QueC family. Requires Zn(2+) as cofactor.

It catalyses the reaction 7-carboxy-7-deazaguanine + NH4(+) + ATP = 7-cyano-7-deazaguanine + ADP + phosphate + H2O + H(+). It functions in the pathway purine metabolism; 7-cyano-7-deazaguanine biosynthesis. Catalyzes the ATP-dependent conversion of 7-carboxy-7-deazaguanine (CDG) to 7-cyano-7-deazaguanine (preQ(0)). The chain is 7-cyano-7-deazaguanine synthase from Methanosphaerula palustris (strain ATCC BAA-1556 / DSM 19958 / E1-9c).